The primary structure comprises 164 residues: Phosphopantetheine adenylyltransferase (164 aa).

Serine 9 provides a ligand contact to substrate. ATP-binding positions include 9–10 (SF) and histidine 17. 3 residues coordinate substrate: lysine 41, leucine 78, and arginine 92. Residues 93-95 (GLR), glutamate 103, and 128-134 (GRVITST) each bind ATP.

The protein belongs to the bacterial CoaD family. In terms of assembly, homohexamer. Requires Mg(2+) as cofactor.

It localises to the cytoplasm. The catalysed reaction is (R)-4'-phosphopantetheine + ATP + H(+) = 3'-dephospho-CoA + diphosphate. It participates in cofactor biosynthesis; coenzyme A biosynthesis; CoA from (R)-pantothenate: step 4/5. Functionally, reversibly transfers an adenylyl group from ATP to 4'-phosphopantetheine, yielding dephospho-CoA (dPCoA) and pyrophosphate. The protein is Phosphopantetheine adenylyltransferase of Bartonella bacilliformis (strain ATCC 35685 / KC583 / Herrer 020/F12,63).